Consider the following 880-residue polypeptide: Leucine--tRNA ligase (880 aa).

The short motif at 46–56 (PYPSGALHMGH) is the 'HIGH' region element. The 'KMSKS' region signature appears at 638-642 (KMSKS). K641 serves as a coordination point for ATP.

The protein belongs to the class-I aminoacyl-tRNA synthetase family.

The protein localises to the cytoplasm. The enzyme catalyses tRNA(Leu) + L-leucine + ATP = L-leucyl-tRNA(Leu) + AMP + diphosphate. This is Leucine--tRNA ligase from Stenotrophomonas maltophilia (strain K279a).